A 241-amino-acid chain; its full sequence is tRNA pseudouridine synthase A (241 aa).

D52 functions as the Nucleophile in the catalytic mechanism. Position 111 (Y111) interacts with substrate.

Belongs to the tRNA pseudouridine synthase TruA family. In terms of assembly, homodimer.

It catalyses the reaction uridine(38/39/40) in tRNA = pseudouridine(38/39/40) in tRNA. Its function is as follows. Formation of pseudouridine at positions 38, 39 and 40 in the anticodon stem and loop of transfer RNAs. This is tRNA pseudouridine synthase A from Ureaplasma urealyticum serovar 10 (strain ATCC 33699 / Western).